Reading from the N-terminus, the 498-residue chain is GTPase Der (498 aa).

2 consecutive EngA-type G domains span residues 3–167 and 210–383; these read PVVA…FDDL and IKLA…KSAT. GTP is bound by residues 9–16, 57–61, 119–122, 216–223, 263–267, and 328–331; these read GRPNVGKS, DTGGI, NKID, DTAGV, and NKWD. The KH-like domain occupies 384 to 468; sequence TRVGTSVLTR…PIRINFQNSE (85 aa).

This sequence belongs to the TRAFAC class TrmE-Era-EngA-EngB-Septin-like GTPase superfamily. EngA (Der) GTPase family. In terms of assembly, associates with the 50S ribosomal subunit.

Functionally, GTPase that plays an essential role in the late steps of ribosome biogenesis. The polypeptide is GTPase Der (Vibrio parahaemolyticus serotype O3:K6 (strain RIMD 2210633)).